The following is a 134-amino-acid chain: Small ribosomal subunit protein uS8c (134 aa).

Belongs to the universal ribosomal protein uS8 family. Part of the 30S ribosomal subunit.

The protein resides in the plastid. It is found in the chloroplast. Its function is as follows. One of the primary rRNA binding proteins, it binds directly to 16S rRNA central domain where it helps coordinate assembly of the platform of the 30S subunit. In Nicotiana tabacum (Common tobacco), this protein is Small ribosomal subunit protein uS8c (rps8).